Consider the following 339-residue polypeptide: Ectoine/5-hydroxyectoine-binding periplasmic protein UehA (339 aa).

The first 20 residues, 1 to 20, serve as a signal peptide directing secretion; it reads MAQSITFTFGAVAAAGIALA. Residues E36, R171, N211, F215, and F236 each coordinate L-ectoine. Cysteines 162 and 303 form a disulfide.

Belongs to the bacterial solute-binding protein 7 family. As to quaternary structure, monomer. The complex comprises the extracytoplasmic solute receptor protein UehA, and the two transmembrane proteins UehB and UehC.

The protein localises to the periplasm. Functionally, part of the tripartite ATP-independent periplasmic (TRAP) transport system UehABC, which imports both ectoine and 5-hydroxyectoine as nutrients, and not as osmoprotectants. UehA binds both ectoine and 5-hydroxyectoine with high specificity and affinity. The chain is Ectoine/5-hydroxyectoine-binding periplasmic protein UehA from Ruegeria pomeroyi (strain ATCC 700808 / DSM 15171 / DSS-3) (Silicibacter pomeroyi).